The primary structure comprises 262 residues: Phosphatidylglycerol--prolipoprotein diacylglyceryl transferase (262 aa).

4 helical membrane passes run 9 to 29, 41 to 61, 80 to 100, and 109 to 129; these read LGPLAIRWYALCIVTGLILAV, IIPDDILDFILVAFPLAILGA, IFAIWNGGLAIYGGLITGALV, and LINTWDFLDIAAPSVMIAQSL. Residue R131 participates in a 1,2-diacyl-sn-glycero-3-phospho-(1'-sn-glycerol) binding. The next 3 helical transmembrane spans lie at 167 to 187, 197 to 217, and 226 to 246; these read QPTFLYESLWNLLGFALILIF, GHITAFYLIWYGFGRMVIEGM, and GFRVSQWLSVVLIGLGIMIVI.

The protein belongs to the Lgt family.

Its subcellular location is the cell membrane. The catalysed reaction is L-cysteinyl-[prolipoprotein] + a 1,2-diacyl-sn-glycero-3-phospho-(1'-sn-glycerol) = an S-1,2-diacyl-sn-glyceryl-L-cysteinyl-[prolipoprotein] + sn-glycerol 1-phosphate + H(+). The protein operates within protein modification; lipoprotein biosynthesis (diacylglyceryl transfer). Its function is as follows. Catalyzes the transfer of the diacylglyceryl group from phosphatidylglycerol to the sulfhydryl group of the N-terminal cysteine of a prolipoprotein, the first step in the formation of mature lipoproteins. The sequence is that of Phosphatidylglycerol--prolipoprotein diacylglyceryl transferase from Streptococcus pneumoniae serotype 4 (strain ATCC BAA-334 / TIGR4).